We begin with the raw amino-acid sequence, 70 residues long: Conotoxin TsMLKM-011 (70 aa).

Positions 1–24 (MLKMGVVLFVFLVLFPLATLQLDA) are cleaved as a signal peptide. A propeptide spanning residues 25-54 (DQPVERYAENKQLVSPYERRQIILHALGQR) is cleaved from the precursor. Cystine bridges form between C56–C66, C57–C68, and C62–C69.

Belongs to the conotoxin M superfamily. Expressed by the venom duct.

It is found in the secreted. The sequence is that of Conotoxin TsMLKM-011 from Conus tessulatus (Tessellate cone).